The sequence spans 322 residues: MTSSMSPAPAPAYAQVMEDMEKGKELAAQLQGLLRDSPEAGRFVDQILHTFSRAMRALDKAAVSAAGGEGSEVQSEVTCGGGASAGGKRKAPAANRKANCRRRTQQSSGNTVVVKNLDDGQAWRKYGQKEIQNSKHPKAYFRCTHKYDQMCTAQRQVQRCDDDPASYRVTYIGEHTCRDPATAPIIAAHVIHQVAAGDDDDGCGGLHAGSRLISFVAAPAAPVDAAAAPTTSTITTVTAPGPLLQPLKVEGGIGSSDQEEVLSSLTPGSSAARGGGVAGPFGPDQGDVTSSLHWSYDAVAGMEFFKNDEVVFDLDDIMGLSF.

The disordered stretch occupies residues 67-110; that stretch reads GGEGSEVQSEVTCGGGASAGGKRKAPAANRKANCRRRTQQSSGN. The WRKY DNA-binding region spans 112–180; it reads VVVKNLDDGQ…YIGEHTCRDP (69 aa). Positions 256–284 are disordered; that stretch reads SDQEEVLSSLTPGSSAARGGGVAGPFGPD.

Belongs to the WRKY group III family. In terms of tissue distribution, expressed in aleurone cells.

Its subcellular location is the nucleus. Transcriptional activator involved in defense responses against pathogens. Acts as a positive regulator of defense responses against the rice blast fungus Magnaporthe oryzae. Acts as a positive regulator of defense responses against the bacterial blight Xanthomonas oryzae pv oryzae (Xoo) and the bacterial streak Xanthomonas oryzae pv oryzicola (Xoc). Acts as a positive regulator of abscisic acid (ABA) signaling that suppresses growth of seedlings. Acts as a negative regulator of salt stress response. Acts as a negative regulator of cold stress response. Acts as a negative regulator of drought stress response. This is Transcription factor WRKY45-2 from Oryza sativa subsp. indica (Rice).